We begin with the raw amino-acid sequence, 236 residues long: UPF0257 lipoprotein YnfC (236 aa).

The signal sequence occupies residues 1 to 16 (MKKPLLLTLLCMILAG). The N-palmitoyl cysteine moiety is linked to residue cysteine 17. A lipid anchor (S-diacylglycerol cysteine) is attached at cysteine 17.

It belongs to the UPF0257 family.

The protein localises to the cell membrane. In Salmonella heidelberg (strain SL476), this protein is UPF0257 lipoprotein YnfC.